Here is a 602-residue protein sequence, read N- to C-terminus: Alpha-glucosides permease MPH3 (602 aa).

Residues 1-106 (MKNLSFLINR…AAAWSLLVST (106 aa)) lie on the Cytoplasmic side of the membrane. The helical transmembrane segment at 107–127 (TLIMEGYDTAILGAFYALPIF) threads the bilayer. At 128–142 (QRKFGSQNDKTGEWE) the chain is on the extracellular side. Residues 143–163 (ISASWQIGLTLCYMAGEIVGL) traverse the membrane as a helical segment. The Cytoplasmic portion of the chain corresponds to 164–178 (QLTGPSVDLVGNRYT). The chain crosses the membrane as a helical span at residues 179-199 (LIIALFFLAAFTFILYFCNSL). Glycine 200 is a topological domain (extracellular). Residues 201-221 (MIAVGQALCGMPWGCFQCLTV) form a helical membrane-spanning segment. Topologically, residues 222 to 234 (SYASEICPLALRY) are cytoplasmic. The helical transmembrane segment at 235-255 (YLTTYSNLCWLFGQLFAAGIM) threads the bilayer. The Extracellular portion of the chain corresponds to 256-270 (KNSQKKYADSELGYK). The chain crosses the membrane as a helical span at residues 271–291 (LPFALQWILPVPLALGIFFAP). The Cytoplasmic segment spans residues 292–363 (ESPWWLVKKG…EDKINRRRTR (72 aa)). Residues 364–384 (ITCLCWAGQATCGSILIGYST) traverse the membrane as a helical segment. The Extracellular segment spans residues 385–397 (YFYEKAGVSTEMS). The chain crosses the membrane as a helical span at residues 398–418 (FTFSIIQYCLGICATFLSWWA). The Cytoplasmic segment spans residues 419 to 426 (SKYFGRYD). Residues 427-447 (LYAFGLAFQTIVFFIIGGLGC) traverse the membrane as a helical segment. Over 448 to 459 (SSTHGSKMGSGS) the chain is Extracellular. Residues 460–480 (LLMAVAFFYNLGIAPVVFCLV) traverse the membrane as a helical segment. Over 481–492 (SEMPSSRLRTKT) the chain is Cytoplasmic. A helical transmembrane segment spans residues 493–513 (IILARNTYNVVSIICSVLILY). Residues 514–525 (QLNSKKWNWGAK) are Extracellular-facing. A helical transmembrane segment spans residues 526–546 (SGFFWGVLCFCTLIWAVVDLP). Topologically, residues 547–602 (ETAGKTFVEINELFKLGVSARKFKSTKVDPFVVKNPPKDVSHNDPKGDIEASIAEE) are cytoplasmic. A disordered region spans residues 580-602 (KNPPKDVSHNDPKGDIEASIAEE). Residues 582 to 595 (PPKDVSHNDPKGDI) are compositionally biased toward basic and acidic residues.

Belongs to the major facilitator superfamily. Sugar transporter (TC 2.A.1.1) family.

It localises to the cell membrane. In terms of biological role, high-affinity uptake of maltose and maltotriose. Also transports alpha-methylglucoside, glucose and turanose but not melezitose or trehalose. In Saccharomyces cerevisiae (strain AWRI1631) (Baker's yeast), this protein is Alpha-glucosides permease MPH3 (MPH3).